Consider the following 429-residue polypeptide: Glutamate-1-semialdehyde 2,1-aminomutase (429 aa).

The residue at position 265 (Lys-265) is an N6-(pyridoxal phosphate)lysine.

This sequence belongs to the class-III pyridoxal-phosphate-dependent aminotransferase family. HemL subfamily. Homodimer. Requires pyridoxal 5'-phosphate as cofactor.

The protein localises to the cytoplasm. It catalyses the reaction (S)-4-amino-5-oxopentanoate = 5-aminolevulinate. It participates in porphyrin-containing compound metabolism; protoporphyrin-IX biosynthesis; 5-aminolevulinate from L-glutamyl-tRNA(Glu): step 2/2. This Legionella pneumophila (strain Lens) protein is Glutamate-1-semialdehyde 2,1-aminomutase.